The primary structure comprises 166 residues: Regulatory protein RecX (166 aa).

The protein belongs to the RecX family.

It is found in the cytoplasm. Modulates RecA activity. The polypeptide is Regulatory protein RecX (Shigella boydii serotype 18 (strain CDC 3083-94 / BS512)).